The primary structure comprises 1056 residues: Kinesin-like protein KIN-5A (1056 aa).

Positions 1-44 are disordered; it reads MDRRIGLTSPSPKSTEKSGRDLRSGGDANGGANTNSNSIPRGDK. Basic and acidic residues predominate over residues 14–24; the sequence is STEKSGRDLRS. The 347-residue stretch at 49–395 folds into the Kinesin motor domain; sequence NVQVILRCRP…LDYAHRAKNI (347 aa). ATP is bound at residue 135 to 142; sequence GQTGTGKT. The stretch at 443–525 forms a coiled coil; it reads QEEAEKKAMT…STIKEKEYVI (83 aa).

Belongs to the TRAFAC class myosin-kinesin ATPase superfamily. Kinesin family. KIN-5/BimC subfamily.

The protein localises to the cytoplasm. Its subcellular location is the cytoskeleton. The protein resides in the spindle. Its function is as follows. Responsible for microtubule translocation. May be important for the organization of phragmoplast-specific arrays of microtubules. Plays an essential role in stabilizing the mitotic spindle. Required during mitotic cytokinesis. The sequence is that of Kinesin-like protein KIN-5A from Oryza sativa subsp. japonica (Rice).